Consider the following 300-residue polypeptide: ClpXP adapter protein SpxH (300 aa).

This sequence belongs to the SpxH family. As to quaternary structure, interacts with Spx.

Its subcellular location is the cytoplasm. Its function is as follows. Adapter protein required for efficient degradation of Spx by ClpXP under non-stress conditions. Interaction with Spx stabilizes Spx and exposes the C-terminus of Spx for recognition and proteolysis by ClpXP. This is ClpXP adapter protein SpxH from Bacillus licheniformis (strain ATCC 14580 / DSM 13 / JCM 2505 / CCUG 7422 / NBRC 12200 / NCIMB 9375 / NCTC 10341 / NRRL NRS-1264 / Gibson 46).